The chain runs to 207 residues: Large ribosomal subunit protein uL4 (207 aa).

The interval 48 to 87 (THAVKNRSAVSGGGKKPWRQKGTGRARQGSIRSPQFRGGG) is disordered.

This sequence belongs to the universal ribosomal protein uL4 family. Part of the 50S ribosomal subunit.

Functionally, one of the primary rRNA binding proteins, this protein initially binds near the 5'-end of the 23S rRNA. It is important during the early stages of 50S assembly. It makes multiple contacts with different domains of the 23S rRNA in the assembled 50S subunit and ribosome. Forms part of the polypeptide exit tunnel. The polypeptide is Large ribosomal subunit protein uL4 (Limosilactobacillus reuteri subsp. reuteri (strain JCM 1112) (Lactobacillus reuteri)).